A 426-amino-acid chain; its full sequence is MAPRKRPENQKTPEVVVRPKSKRNRSPRELEPEAKKLCVKGPGSSRRFDSGLWAGLASLRVPPLCSSIVRALHQHKLGTAAWPSLQQGLQQSFLNSLASYRIFQKAAPFDRRATSLAWHPTHPSTLAVGSKGGDILLWNFGIKDKPTFIKGIGAGGSITGMKFNPLNTNQFFTSSMEGTTRLQDFKGNTLRVFASSDTCNVWFCSLDVSVKSRVVVTGDNVGHVILLNMDGRELWNLRMHKKKVTHVALNPCCDWLLATASVDQTVKIWDLRQVRGKSSFLHSLPHRHPVNAAHFSPDGAQLLTTDQKSEIRVYSACQWDCPPSLIPHPHRHFQHLTPIKASWHPRYNLIVVGRYPDPNFKSCSPHELRTIDVFDGSSGKIMYQLYDPESSGIMSLNEFNPMGDTLASVMGYHILVWSPEDAGTQK.

Residues 1 to 11 show a composition bias toward basic and acidic residues; that stretch reads MAPRKRPENQK. Residues 1-33 form a disordered region; that stretch reads MAPRKRPENQKTPEVVVRPKSKRNRSPRELEPE. A Phosphoserine modification is found at Ser-26. N6-acetyllysine occurs at positions 35 and 76. 2 required for interaction with DDB1 regions span residues 67–78 and 86–97; these read SIVRALHQHKLG and QQGLQQSFLNSL. WD repeat units follow at residues 115 to 150, 158 to 193, 202 to 237, 243 to 286, and 289 to 328; these read SLAW…TFIK, ITGM…LRVF, WFCS…LWNL, KVTH…SLPH, and PVNA…LIPH. A DWD box motif is present at residues 255–273; that stretch reads WLLATASVDQTVKIWDLRQ. A photolesion recognition region spans residues 333–335; it reads FQH. WD repeat units lie at residues 342–385 and 395–419; these read SWHP…MYQL and SLNE…VWSP.

Belongs to the WD repeat DDB2/WDR76 family. As to quaternary structure, component of the UV-DDB complex which includes DDB1 and DDB2. The UV-DDB complex interacts with monoubiquitinated histone H2A and binds to XPC via the DDB2 subunit. Component of the DCX (DDB1-CUL4-X-box) E3 ubiquitin-protein ligase complex DDB1-CUL4-ROC1 (also known as CUL4-DDB-ROC1 and CUL4-DDB-RBX1), which includes CUL4A or CUL4B, DDB1, DDB2 and RBX1. DDB2 may function as the substrate recognition module within this complex. The DDB1-CUL4-ROC1 complex may associate with the COP9 signalosome, and this inhibits the E3 ubiquitin-protein ligase activity of the complex. A large number of other DCX complexes may also exist in which an alternate substrate targeting subunit replaces DDB2. These targeting subunits are generally known as DCAF (DDB1- and CUL4-associated factor) or CDW (CUL4-DDB1-associated WD40-repeat) proteins. In terms of processing, phosphorylation by ABL1 negatively regulate UV-DDB activity. Post-translationally, ubiquitinated by CUL4A in response to UV irradiation. Ubiquitination appears to both impair DNA-binding and promotes ubiquitin-dependent proteolysis. Degradation of DDB2 at sites of DNA damage may be a prerequisite for their recognition by XPC and subsequent repair. CUL4A-mediated degradation appears to be promoted by ABL1. Ubiquitinated, leading to proteasomal degradation, and deubiquitinated by USP24. Deubiquitinated by USP44; leading to its stabilization on DNA lesions. In terms of processing, acetylated. Deacetylation by SIRT6 in response to UV stress facilitates nucleotide excision repair pathway (the NER pathway) transduction.

The protein localises to the nucleus. It is found in the chromosome. It participates in protein modification; protein ubiquitination. Functionally, protein, which is both involved in DNA repair and protein ubiquitination, as part of the UV-DDB complex and DCX (DDB1-CUL4-X-box) complexes, respectively. Core component of the UV-DDB complex (UV-damaged DNA-binding protein complex), a complex that recognizes UV-induced DNA damage and recruit proteins of the nucleotide excision repair pathway (the NER pathway) to initiate DNA repair. The UV-DDB complex preferentially binds to cyclobutane pyrimidine dimers (CPD), 6-4 photoproducts (6-4 PP), apurinic sites and short mismatches. Also functions as the substrate recognition module for the DCX (DDB2-CUL4-X-box) E3 ubiquitin-protein ligase complex DDB2-CUL4-ROC1 (also known as CUL4-DDB-ROC1 and CUL4-DDB-RBX1). The DDB2-CUL4-ROC1 complex may ubiquitinate histone H2A, histone H3 and histone H4 at sites of UV-induced DNA damage. The ubiquitination of histones may facilitate their removal from the nucleosome and promote subsequent DNA repair. The DDB2-CUL4-ROC1 complex also ubiquitinates XPC, which may enhance DNA-binding by XPC and promote NER. The DDB2-CUL4-ROC1 complex also ubiquitinates KAT7/HBO1 in response to DNA damage, leading to its degradation: recognizes KAT7/HBO1 following phosphorylation by ATR. The polypeptide is DNA damage-binding protein 2 (DDB2) (Bos taurus (Bovine)).